Here is a 261-residue protein sequence, read N- to C-terminus: Large ribosomal subunit protein uL2 (261 aa).

The tract at residues 207–233 (VEHPHGGGNHQHIGKASTVKRGTPPGR) is disordered.

This sequence belongs to the universal ribosomal protein uL2 family.

The protein localises to the cytoplasm. This chain is Large ribosomal subunit protein uL2 (RpL8), found in Aedes albopictus (Asian tiger mosquito).